The sequence spans 294 residues: UPF0761 membrane protein YPTB0027 (294 aa).

7 helical membrane-spanning segments follow: residues 44 to 64 (LLSLVPLITVIFALFAAFPMF), 67 to 87 (ISIKLKAFIFANFMPATGDII), 108 to 128 (GLIVTALLLIYSVDSVLNIIW), 136 to 156 (LVFSFAVYWMVLTLGPILVGA), 185 to 205 (VFPLLISWVSFWLLYSVVPTV), 212 to 232 (ALIGALVAALLFELGKKGFAM), and 246 to 266 (VLAVIPILFLWVYWSWCIVLL).

It belongs to the UPF0761 family.

The protein localises to the cell inner membrane. In Yersinia pseudotuberculosis serotype I (strain IP32953), this protein is UPF0761 membrane protein YPTB0027.